The primary structure comprises 151 residues: Large ribosomal subunit protein bL9 (151 aa).

Belongs to the bacterial ribosomal protein bL9 family.

Functionally, binds to the 23S rRNA. The chain is Large ribosomal subunit protein bL9 from Chlorobium phaeobacteroides (strain DSM 266 / SMG 266 / 2430).